A 113-amino-acid polypeptide reads, in one-letter code: Putative membrane protein insertion efficiency factor (113 aa).

This sequence belongs to the UPF0161 family.

Its subcellular location is the cell inner membrane. Functionally, could be involved in insertion of integral membrane proteins into the membrane. This is Putative membrane protein insertion efficiency factor from Campylobacter curvus (strain 525.92).